We begin with the raw amino-acid sequence, 258 residues long: tRNA pseudouridine synthase A (258 aa).

Aspartate 61 acts as the Nucleophile in catalysis. Tyrosine 119 contributes to the substrate binding site.

The protein belongs to the tRNA pseudouridine synthase TruA family. Homodimer.

The enzyme catalyses uridine(38/39/40) in tRNA = pseudouridine(38/39/40) in tRNA. Formation of pseudouridine at positions 38, 39 and 40 in the anticodon stem and loop of transfer RNAs. The polypeptide is tRNA pseudouridine synthase A (Chlorobium phaeobacteroides (strain DSM 266 / SMG 266 / 2430)).